Consider the following 241-residue polypeptide: Terpene cyclase terB (241 aa).

The next 5 helical transmembrane spans lie at 19–39 (LADT…GAMI), 48–68 (YCMG…YTLV), 75–95 (VELA…FAAT), 114–134 (LIFL…AAEI), and 137–157 (ALAY…GGVC). Asn-163 carries N-linked (GlcNAc...) asparagine glycosylation. 2 helical membrane passes run 169–189 (SVTL…FAFL) and 198–218 (FAWL…LADI).

The protein belongs to the paxB family.

Its subcellular location is the membrane. Its pathway is secondary metabolite biosynthesis. Terpene cyclase; part of the gene cluster that mediates the biosynthesis of terpendoles, indole-diterpene (IDT) mycotoxins including terpendole I, terpendole K, terpendole C, as well as the kinesin Eg5 inhibitor terpendole E. Terpendoles biosynthesis begins with the synthesis of geranylgeranyl diphosphate (GGPP) by a yet unidentified GGPP synthase. Condensation of indole-3-glycerol phosphate with GGPP by the prenyltransferase terC then forms 3-geranylgeranylindole (3-GGI), followed by epoxidation and cyclization of this intermediate (by the FAD-dependent monooxygeanse terM and the terpene cyclase terB) to form paspaline. The cytochrome monooxygenase terQ then hydroxylates paspalline at C-11 to yield terpendole E. The cytochrome monooxygenase terP converts terpendole E to 13-desoxyterpendole I, and terQ converts 13-desoxyterpendole I into terpendole I. TerF and terK are required for conversion of terpendole I to terpendole C which is further converted to terpendole K. This Tolypocladium album (Soil fungus) protein is Terpene cyclase terB.